The chain runs to 924 residues: Exocyst complex component 2 (924 aa).

An IPT/TIG domain is found at 8–93 (PLVTGISPNE…GTSTVSFKLL (86 aa)). The stretch at 240-260 (QKLENVLNRASNTADTLFQEV) forms a coiled coil. 3 positions are modified to phosphoserine: serine 431, serine 432, and serine 435. Position 440 is a phosphothreonine (threonine 440). Lysine 454 carries the N6-acetyllysine modification.

It belongs to the SEC5 family. As to quaternary structure, the exocyst complex is composed of EXOC1, EXOC2, EXOC3, EXOC4, EXOC5, EXOC6, EXOC7 and EXOC8. Interacts with EXOC3L1. Interacts with GNEFR/DELGEF; this interaction occurs only in the presence of magnesium or manganese and is stimulated by dCTP or GTP. Interacts with RALA and RALB. Interacts with ARL13B; regulates ARL13B localization to the cilium membrane.

The protein resides in the midbody. Its subcellular location is the midbody ring. Its function is as follows. Component of the exocyst complex involved in the docking of exocytic vesicles with fusion sites on the plasma membrane. The sequence is that of Exocyst complex component 2 (Exoc2) from Mus musculus (Mouse).